Consider the following 80-residue polypeptide: Small ribosomal subunit protein bS18 (80 aa).

This sequence belongs to the bacterial ribosomal protein bS18 family. As to quaternary structure, part of the 30S ribosomal subunit. Forms a tight heterodimer with protein bS6.

Functionally, binds as a heterodimer with protein bS6 to the central domain of the 16S rRNA, where it helps stabilize the platform of the 30S subunit. The sequence is that of Small ribosomal subunit protein bS18 from Staphylococcus aureus (strain Mu3 / ATCC 700698).